A 453-amino-acid chain; its full sequence is uncharacterized protein (453 aa).

Cys-74, Cys-80, Cys-83, and Cys-162 together coordinate [4Fe-4S] cluster. Gln-286, Tyr-315, Glu-336, and Asp-384 together coordinate S-adenosyl-L-methionine. Residue Cys-411 is the Nucleophile of the active site.

This sequence belongs to the class I-like SAM-binding methyltransferase superfamily. RNA M5U methyltransferase family.

This is an uncharacterized protein from Staphylococcus aureus (strain MW2).